Here is a 634-residue protein sequence, read N- to C-terminus: Chaperone protein HtpG (634 aa).

The segment at 1–339 (MAQETMSFQA…SADLPLNVSR (339 aa)) is a; substrate-binding. The b stretch occupies residues 340-559 (EILQESRDVK…DGEMSGYLQR (220 aa)). Positions 560–634 (MLKAAGQQAP…ALLLARANEA (75 aa)) are c.

This sequence belongs to the heat shock protein 90 family. In terms of assembly, homodimer.

Its subcellular location is the cytoplasm. In terms of biological role, molecular chaperone. Has ATPase activity. The polypeptide is Chaperone protein HtpG (Paraburkholderia xenovorans (strain LB400)).